Reading from the N-terminus, the 117-residue chain is LYR motif-containing protein 1 (117 aa).

Belongs to the complex I LYR family.

This Dictyostelium discoideum (Social amoeba) protein is LYR motif-containing protein 1 (lyrm1).